Reading from the N-terminus, the 489-residue chain is MQESKEPQNKFEGCQRISSSSSTLFGGTSFEEPRCGTSQGKEEDAFACNNGDHCSSITNVQEDDFVLPELLPSFEMYENLLSNIPQSSFDTYFPENPPFYEVASRNQSIPSEGESGNDMRILTGDIVGPDNHEVTVDGRRFASGPAESQIRNYDDTKGIPVENIYALPRIKTPIATELYVTKTAPKFGQLPKHESMLREYTSGDIIHGYFTVENKSTKPIKFDMFYLTLEGTTSSKTQSPFGIQKTTERILRMVDMAASWSYNHEDVNTGEDLCGFFDSIDKTSFGLPNSRILNPGDKRKKFFTFKIPNQLLDVTCKHGHFSHSLLPPTLGFDRPSSSHPELSTLKFSESLGYGRLSERGSSLWLNDSSSGSLINYSINAMIVGKDVASGRVCLMSEKKYSIRIVPFGFQNNPISREKCLKDLEDFDIEIANRLGMIEKVFSKIERAIPIHKEDIQEANRSDQLSPLRGKYEWNAVAGNTENGTLKKKH.

The disordered stretch occupies residues 1–42; the sequence is MQESKEPQNKFEGCQRISSSSSTLFGGTSFEEPRCGTSQGKE. Residues 18-30 show a composition bias toward low complexity; sequence SSSSSTLFGGTSF. 2 positions are modified to phosphoserine: serine 111 and serine 350.

The protein belongs to the BUL1 family.

Appears to play a role in translation fidelity, and may act when translation is compromised. May be a component of the ubiquitination pathway. This is Bypass of stop codon protein 5 (BSC5) from Saccharomyces cerevisiae (strain ATCC 204508 / S288c) (Baker's yeast).